Here is a 267-residue protein sequence, read N- to C-terminus: Undecaprenyl-diphosphatase (267 aa).

Helical transmembrane passes span 1–21 (MSYF…FLPI), 39–59 (QGLA…VIYF), 83–103 (AKLA…GLLM), 111–131 (LRSA…LWWV), 144–164 (TGWK…IPGT), 189–209 (FLMS…KLVT), 218–238 (FLLT…HFFL), and 245–265 (GMTP…AFLL).

This sequence belongs to the UppP family.

It localises to the cell inner membrane. The catalysed reaction is di-trans,octa-cis-undecaprenyl diphosphate + H2O = di-trans,octa-cis-undecaprenyl phosphate + phosphate + H(+). Functionally, catalyzes the dephosphorylation of undecaprenyl diphosphate (UPP). Confers resistance to bacitracin. The protein is Undecaprenyl-diphosphatase of Vibrio parahaemolyticus serotype O3:K6 (strain RIMD 2210633).